Reading from the N-terminus, the 314-residue chain is Nodulation protein D 1 (314 aa).

An HTH lysR-type domain is found at 6-63 (LDLNLLVVLDALLTERTLTAAASSINLSQPAMSAAVARLRDYFNDELFTTSGRERVLT). A DNA-binding region (H-T-H motif) is located at residues 23-42 (LTAAASSINLSQPAMSAAVA).

Belongs to the LysR transcriptional regulatory family.

NodD regulates the expression of the nodABCFE genes which encode other nodulation proteins. NodD is also a negative regulator of its own expression. Binds flavenoids as inducers. The sequence is that of Nodulation protein D 1 (nodD1) from Mesorhizobium japonicum (strain LMG 29417 / CECT 9101 / MAFF 303099) (Mesorhizobium loti (strain MAFF 303099)).